We begin with the raw amino-acid sequence, 151 residues long: Small ribosomal subunit protein uS15 (151 aa).

The protein belongs to the universal ribosomal protein uS15 family.

This is Small ribosomal subunit protein uS15 (RpS13) from Plutella xylostella (Diamondback moth).